A 602-amino-acid polypeptide reads, in one-letter code: Elongation factor 4 (602 aa).

Residues 7–196 (SKIRNFCIIA…HPQNEIKSPT (190 aa)) enclose the tr-type G domain. Residues 19-24 (DHGKST) and 136-139 (NKVD) contribute to the GTP site.

The protein belongs to the TRAFAC class translation factor GTPase superfamily. Classic translation factor GTPase family. LepA subfamily.

Its subcellular location is the cell inner membrane. It catalyses the reaction GTP + H2O = GDP + phosphate + H(+). In terms of biological role, required for accurate and efficient protein synthesis under certain stress conditions. May act as a fidelity factor of the translation reaction, by catalyzing a one-codon backward translocation of tRNAs on improperly translocated ribosomes. Back-translocation proceeds from a post-translocation (POST) complex to a pre-translocation (PRE) complex, thus giving elongation factor G a second chance to translocate the tRNAs correctly. Binds to ribosomes in a GTP-dependent manner. The sequence is that of Elongation factor 4 from Prochlorococcus marinus (strain MIT 9515).